The sequence spans 69 residues: Large ribosomal subunit protein uL29 (69 aa).

The protein belongs to the universal ribosomal protein uL29 family.

The polypeptide is Large ribosomal subunit protein uL29 (Carboxydothermus hydrogenoformans (strain ATCC BAA-161 / DSM 6008 / Z-2901)).